A 185-amino-acid polypeptide reads, in one-letter code: Peptidyl-tRNA hydrolase (185 aa).

Tyr-14 contributes to the tRNA binding site. Catalysis depends on His-19, which acts as the Proton acceptor. Positions 64, 66, and 112 each coordinate tRNA.

The protein belongs to the PTH family. Monomer.

It localises to the cytoplasm. The catalysed reaction is an N-acyl-L-alpha-aminoacyl-tRNA + H2O = an N-acyl-L-amino acid + a tRNA + H(+). In terms of biological role, hydrolyzes ribosome-free peptidyl-tRNAs (with 1 or more amino acids incorporated), which drop off the ribosome during protein synthesis, or as a result of ribosome stalling. Catalyzes the release of premature peptidyl moieties from peptidyl-tRNA molecules trapped in stalled 50S ribosomal subunits, and thus maintains levels of free tRNAs and 50S ribosomes. The chain is Peptidyl-tRNA hydrolase from Lacticaseibacillus casei (strain BL23) (Lactobacillus casei).